The following is a 1770-amino-acid chain: Transposon Ty2-GR1 Gag-Pol polyprotein (1770 aa).

Polar residues-rich tracts occupy residues 1-11, 19-39, and 49-60; these read MESQQLHQNPH, ASVT…SASN, and KVNSQQETTPGT. Disordered stretches follow at residues 1–86 and 360–453; these read MESQ…GQYQ and HSEY…LPDH. The tract at residues 295 to 397 is RNA-binding; that stretch reads ENNINVSDRL…SSKPRAAKAH (103 aa). Over residues 369–381 the composition is skewed to low complexity; the sequence is TSPNTTNTKVTTR. Residues 399–408 show a composition bias toward polar residues; sequence IATSSKFSRV. The For protease activity; shared with dimeric partner role is filled by aspartate 457. Positions 579-636 are integrase-type zinc finger-like; sequence NVNKSKSVNKYPYPLIHRMLGHANFRSIQKSLKKNAVTYLKESDIEWSNASTYQCPDC. The 176-residue stretch at 656–831 folds into the Integrase catalytic domain; it reads ESYEPFQYLH…AGLDITTILP (176 aa). Positions 667 and 732 each coordinate Mg(2+). Disordered stretches follow at residues 1004 to 1034, 1059 to 1135, 1146 to 1165, and 1170 to 1205; these read MGGT…STNE, TEEP…KSSK, LPLP…VSKD, and HSRQ…TEIE. Composition is skewed to polar residues over residues 1009 to 1034 and 1065 to 1082; these read ESDT…STNE and QRNS…STPS. Residues 1151–1165 show a composition bias toward basic and acidic residues; it reads LTHKSPTDTSDVSKD. The short motif at 1193–1227 is the Bipartite nuclear localization signal element; that stretch reads KKRSLEDNETEIEVSRDTWNNKNMRSLEPPRSKKR. Residues 1353–1491 form the Reverse transcriptase Ty1/copia-type domain; it reads NDYYITQLDI…DILGLEIKYQ (139 aa). The Mg(2+) site is built by aspartate 1361, aspartate 1442, aspartate 1443, aspartate 1625, glutamate 1667, and aspartate 1700. The 143-residue stretch at 1625–1767 folds into the RNase H Ty1/copia-type domain; it reads DASYGNQPYY…IKTFKLLTNK (143 aa).

The capsid protein forms a homotrimer, from which the VLPs are assembled. The protease is a homodimer, whose active site consists of two apposed aspartic acid residues. Post-translationally, initially, virus-like particles (VLPs) are composed of the structural unprocessed proteins Gag and Gag-Pol, and also contain the host initiator methionine tRNA (tRNA(i)-Met) which serves as a primer for minus-strand DNA synthesis, and a dimer of genomic Ty RNA. Processing of the polyproteins occurs within the particle and proceeds by an ordered pathway, called maturation. First, the protease (PR) is released by autocatalytic cleavage of the Gag-Pol polyprotein, and this cleavage is a prerequisite for subsequent processing at the remaining sites to release the mature structural and catalytic proteins. Maturation takes place prior to the RT reaction and is required to produce transposition-competent VLPs.

The protein localises to the cytoplasm. It is found in the nucleus. It catalyses the reaction DNA(n) + a 2'-deoxyribonucleoside 5'-triphosphate = DNA(n+1) + diphosphate. It carries out the reaction Endonucleolytic cleavage to 5'-phosphomonoester.. In terms of biological role, capsid protein (CA) is the structural component of the virus-like particle (VLP), forming the shell that encapsulates the retrotransposons dimeric RNA genome. The particles are assembled from trimer-clustered units and there are holes in the capsid shells that allow for the diffusion of macromolecules. CA also has nucleocapsid-like chaperone activity, promoting primer tRNA(i)-Met annealing to the multipartite primer-binding site (PBS), dimerization of Ty2 RNA and initiation of reverse transcription. Functionally, the aspartyl protease (PR) mediates the proteolytic cleavages of the Gag and Gag-Pol polyproteins after assembly of the VLP. Its function is as follows. Reverse transcriptase/ribonuclease H (RT) is a multifunctional enzyme that catalyzes the conversion of the retro-elements RNA genome into dsDNA within the VLP. The enzyme displays a DNA polymerase activity that can copy either DNA or RNA templates, and a ribonuclease H (RNase H) activity that cleaves the RNA strand of RNA-DNA heteroduplexes during plus-strand synthesis and hydrolyzes RNA primers. The conversion leads to a linear dsDNA copy of the retrotransposon that includes long terminal repeats (LTRs) at both ends. Integrase (IN) targets the VLP to the nucleus, where a subparticle preintegration complex (PIC) containing at least integrase and the newly synthesized dsDNA copy of the retrotransposon must transit the nuclear membrane. Once in the nucleus, integrase performs the integration of the dsDNA into the host genome. This chain is Transposon Ty2-GR1 Gag-Pol polyprotein (TY2B-GR1), found in Saccharomyces cerevisiae (strain ATCC 204508 / S288c) (Baker's yeast).